A 213-amino-acid chain; its full sequence is Octanoyltransferase (213 aa).

Residues 32-207 (ENSHDEIWLV…NILALLNNPP (176 aa)) enclose the BPL/LPL catalytic domain. Residues 71–78 (RGGQVTYH), 138–140 (SLG), and 151–153 (GLA) each bind substrate. The active-site Acyl-thioester intermediate is the C169.

This sequence belongs to the LipB family.

It localises to the cytoplasm. It catalyses the reaction octanoyl-[ACP] + L-lysyl-[protein] = N(6)-octanoyl-L-lysyl-[protein] + holo-[ACP] + H(+). Its pathway is protein modification; protein lipoylation via endogenous pathway; protein N(6)-(lipoyl)lysine from octanoyl-[acyl-carrier-protein]: step 1/2. In terms of biological role, catalyzes the transfer of endogenously produced octanoic acid from octanoyl-acyl-carrier-protein onto the lipoyl domains of lipoate-dependent enzymes. Lipoyl-ACP can also act as a substrate although octanoyl-ACP is likely to be the physiological substrate. This Salmonella paratyphi A (strain ATCC 9150 / SARB42) protein is Octanoyltransferase.